Reading from the N-terminus, the 1884-residue chain is Fatty acid synthase subunit alpha (1884 aa).

The disordered stretch occupies residues 91–141; the sequence is TPDPAEPPAAEEPKAETGKESAPAASAAAAAATQPAAAVAPPPQSAGPVES. The segment covering 111 to 129 has biased composition (low complexity); the sequence is SAPAASAAAAAATQPAAAV. In terms of domain architecture, Carrier spans 147 to 222; that stretch reads VKASLLIHVL…EQFQDTFSGS (76 aa). Ser-182 bears the O-(pantetheine 4'-phosphoryl)serine mark. The segment at 583 to 613 is disordered; that stretch reads TEQTTQDALAIPTGSNTPTEEDELSTASDDD. The span at 584 to 600 shows a compositional bias: polar residues; that stretch reads EQTTQDALAIPTGSNTP. Residues 601 to 613 show a composition bias toward acidic residues; that stretch reads TEEDELSTASDDD. Positions 677 to 873 are beta-ketoacyl reductase; that stretch reads DKYVLVTGAG…CGAIIGWTRG (197 aa). The region spanning 1120–1660 is the Ketosynthase family 3 (KS3) domain; sequence IQEVVIQHDL…QKGAQAVVVH (541 aa). Catalysis depends on for beta-ketoacyl synthase activity residues Cys-1303, His-1545, and His-1586. Positions 1770, 1771, and 1772 each coordinate Mg(2+). Acetyl-CoA is bound by residues 1770 to 1772, Tyr-1796, Ser-1806, 1815 to 1825, 1839 to 1842, and 1869 to 1871; these read DVE, EATFKALGVSS, RDGN, and ISH. Mg(2+) is bound by residues Ser-1870 and His-1871.

Belongs to the thiolase-like superfamily. Fungal fatty acid synthetase subunit alpha family. Fatty acid synthase is composed of alpha and beta subunits.

It catalyses the reaction acetyl-CoA + n malonyl-CoA + 2n NADPH + 4n H(+) = a long-chain-acyl-CoA + n CoA + n CO2 + 2n NADP(+).. It carries out the reaction a fatty acyl-[ACP] + malonyl-[ACP] + H(+) = a 3-oxoacyl-[ACP] + holo-[ACP] + CO2. The catalysed reaction is a (3R)-hydroxyacyl-[ACP] + NADP(+) = a 3-oxoacyl-[ACP] + NADPH + H(+). In terms of biological role, fatty acid synthetase catalyzes the formation of long-chain fatty acids from acetyl-CoA, malonyl-CoA and NADPH. The alpha subunit contains domains for: acyl carrier protein, 3-oxoacyl-[acyl-carrier-protein] reductase, and 3-oxoacyl-[acyl-carrier-protein] synthase. In Candida parapsilosis (strain CDC 317 / ATCC MYA-4646) (Yeast), this protein is Fatty acid synthase subunit alpha (FAS2).